The primary structure comprises 180 residues: ATP-dependent protease subunit HslV (180 aa).

Residue T5 is part of the active site. Residues G161, C164, and T167 each coordinate Na(+).

Belongs to the peptidase T1B family. HslV subfamily. As to quaternary structure, a double ring-shaped homohexamer of HslV is capped on each side by a ring-shaped HslU homohexamer. The assembly of the HslU/HslV complex is dependent on binding of ATP.

The protein localises to the cytoplasm. The enzyme catalyses ATP-dependent cleavage of peptide bonds with broad specificity.. With respect to regulation, allosterically activated by HslU binding. Functionally, protease subunit of a proteasome-like degradation complex believed to be a general protein degrading machinery. This Campylobacter curvus (strain 525.92) protein is ATP-dependent protease subunit HslV.